Consider the following 305-residue polypeptide: N-acetylmuramic acid 6-phosphate etherase (305 aa).

An SIS domain is found at 54–217; the sequence is AVPQLERGGR…SSALMVRLGK (164 aa). The Proton donor role is filled by Glu-82. The active site involves Glu-113.

Belongs to the GCKR-like family. MurNAc-6-P etherase subfamily. Homodimer.

It catalyses the reaction N-acetyl-D-muramate 6-phosphate + H2O = N-acetyl-D-glucosamine 6-phosphate + (R)-lactate. It participates in amino-sugar metabolism; N-acetylmuramate degradation. Specifically catalyzes the cleavage of the D-lactyl ether substituent of MurNAc 6-phosphate, producing GlcNAc 6-phosphate and D-lactate. The chain is N-acetylmuramic acid 6-phosphate etherase from Deinococcus radiodurans (strain ATCC 13939 / DSM 20539 / JCM 16871 / CCUG 27074 / LMG 4051 / NBRC 15346 / NCIMB 9279 / VKM B-1422 / R1).